Reading from the N-terminus, the 79-residue chain is MGGFTSIWHWVIVLLVIVLLFGAKKIPELAKGLGSGIKNFKKAVKDDEEEAKNEPKTLDAQATQTKVHETSEIKSKQES.

The helical transmembrane segment at 1–21 (MGGFTSIWHWVIVLLVIVLLF) threads the bilayer. The disordered stretch occupies residues 46–79 (DDEEEAKNEPKTLDAQATQTKVHETSEIKSKQES). Over residues 66-79 (KVHETSEIKSKQES) the composition is skewed to basic and acidic residues.

Belongs to the TatA/E family. The Tat system comprises two distinct complexes: a TatABC complex, containing multiple copies of TatA, TatB and TatC subunits, and a separate TatA complex, containing only TatA subunits. Substrates initially bind to the TatABC complex, which probably triggers association of the separate TatA complex to form the active translocon.

The protein localises to the cell inner membrane. Its function is as follows. Part of the twin-arginine translocation (Tat) system that transports large folded proteins containing a characteristic twin-arginine motif in their signal peptide across membranes. TatA could form the protein-conducting channel of the Tat system. This Helicobacter pylori (strain HPAG1) protein is Sec-independent protein translocase protein TatA.